The chain runs to 791 residues: Cellobionic acid phosphorylase (791 aa).

The active-site Proton donor is D478.

It belongs to the glycosyl hydrolase 94 family. Cellobionic acid phosphorylase subfamily. As to quaternary structure, homodimer.

It carries out the reaction 4-O-beta-D-glucopyranosyl-D-gluconate + phosphate = D-gluconate + alpha-D-glucose 1-phosphate. The protein operates within glycan metabolism; cellulose degradation. Functionally, catalyzes the reversible phosphorolysis of cellobionic acid (4-O-beta-D-glucopyranosyl-D-gluconate), a probable step in cellulose degradation. May be part of a metabolic pathway where cellobionic acid is converted into alpha-D-glucose 1-phosphate and D-gluconic acid to enter glycolysis and the pentose phosphate pathway, respectively. Produces 4-O-beta-D-glucopyranosyl-D-glucuronate from alpha-D-glucose 1-phosphate and D-glucuronate with low activity in the synthetic direction. The polypeptide is Cellobionic acid phosphorylase (Neurospora crassa (strain ATCC 24698 / 74-OR23-1A / CBS 708.71 / DSM 1257 / FGSC 987)).